The sequence spans 74 residues: ATP synthase subunit c (74 aa).

2 consecutive transmembrane segments (helical) span residues 8–28 (FIGV…VSNI) and 52–72 (IGAG…MLLI).

The protein belongs to the ATPase C chain family. In terms of assembly, F-type ATPases have 2 components, F(1) - the catalytic core - and F(0) - the membrane proton channel. F(1) has five subunits: alpha(3), beta(3), gamma(1), delta(1), epsilon(1). F(0) has three main subunits: a(1), b(2) and c(10-14). The alpha and beta chains form an alternating ring which encloses part of the gamma chain. F(1) is attached to F(0) by a central stalk formed by the gamma and epsilon chains, while a peripheral stalk is formed by the delta and b chains.

It is found in the cell inner membrane. F(1)F(0) ATP synthase produces ATP from ADP in the presence of a proton or sodium gradient. F-type ATPases consist of two structural domains, F(1) containing the extramembraneous catalytic core and F(0) containing the membrane proton channel, linked together by a central stalk and a peripheral stalk. During catalysis, ATP synthesis in the catalytic domain of F(1) is coupled via a rotary mechanism of the central stalk subunits to proton translocation. In terms of biological role, key component of the F(0) channel; it plays a direct role in translocation across the membrane. A homomeric c-ring of between 10-14 subunits forms the central stalk rotor element with the F(1) delta and epsilon subunits. This is ATP synthase subunit c from Rickettsia bellii (strain RML369-C).